The chain runs to 802 residues: Leucine--tRNA ligase (802 aa).

The 'HIGH' region signature appears at 40-51; the sequence is PYPSGAGLHVGH. Positions 576–580 match the 'KMSKS' region motif; that stretch reads KMSKS. An ATP-binding site is contributed by Lys-579.

The protein belongs to the class-I aminoacyl-tRNA synthetase family.

It localises to the cytoplasm. It carries out the reaction tRNA(Leu) + L-leucine + ATP = L-leucyl-tRNA(Leu) + AMP + diphosphate. This is Leucine--tRNA ligase from Bacillus anthracis (strain A0248).